We begin with the raw amino-acid sequence, 180 residues long: MDLEKLKEETQIIIDDVLKQTEIKSGQVFVLGLSSSEVNGGLIGHASSAEIGQVIVSVIHKTLSDKGIYLAVQACEHLNRALLIEEELADKKDWEIVSVVPQLHAGGSGQVAAYQLFKSPVEVEHIVAQAGLDIGDTSIGMHVKHVQIPVRPISKELGGAHVTSLKSRPKLIGGERARYE.

It belongs to the UPF0340 family.

The chain is UPF0340 protein LACR_0494 from Lactococcus lactis subsp. cremoris (strain SK11).